The sequence spans 322 residues: Deoxyhypusine hydroxylase (322 aa).

Fe cation is bound by residues H78, E79, H111, and E112. HEAT-like PBS-type repeat units lie at residues 109–135 (VRHEAAEALGALGDKDSLEDLEKCLKN), 203–229 (LRYRAMFRLRDIGTDEAVLALASGFND), 234–260 (FKHEIAYVFGQMGSTAAVPSLTEVLGR), and 267–293 (VRHEAAEALGAIASEDALPILKQYLND). Residues H236, E237, H269, and E270 each coordinate Fe cation.

This sequence belongs to the deoxyhypusine hydroxylase family. Requires Fe(2+) as cofactor.

The protein resides in the cytoplasm. The protein localises to the nucleus. It catalyses the reaction [eIF5A protein]-deoxyhypusine + AH2 + O2 = [eIF5A protein]-hypusine + A + H2O. It participates in protein modification; eIF5A hypusination. Its function is as follows. Catalyzes the hydroxylation of the N(6)-(4-aminobutyl)-L-lysine intermediate to form hypusine, an essential post-translational modification only found in mature eIF-5A factor. The sequence is that of Deoxyhypusine hydroxylase from Candida glabrata (strain ATCC 2001 / BCRC 20586 / JCM 3761 / NBRC 0622 / NRRL Y-65 / CBS 138) (Yeast).